An 87-amino-acid chain; its full sequence is Cell division protein FtsL (87 aa).

Residues 1-6 lie on the Cytoplasmic side of the membrane; that stretch reads MNKSNF. Residues 7 to 23 traverse the membrane as a helical segment; it reads FLLLAVCVSAFSVVMQQ. The Periplasmic segment spans residues 24 to 87; that stretch reads NQYRLNFTAL…GNTFMVEHQR (64 aa). A coiled-coil region spans residues 31-71; it reads TALDKAKKQEIALEQDYAQMRLQQARLANHEAIRAAAEKQN. The interval 68 to 87 is disordered; the sequence is EKQNLHPPVSGNTFMVEHQR.

The protein belongs to the FtsL family. As to quaternary structure, part of a complex composed of FtsB, FtsL and FtsQ.

It is found in the cell inner membrane. Functionally, essential cell division protein. May link together the upstream cell division proteins, which are predominantly cytoplasmic, with the downstream cell division proteins, which are predominantly periplasmic. The protein is Cell division protein FtsL of Neisseria gonorrhoeae (strain ATCC 700825 / FA 1090).